A 217-amino-acid polypeptide reads, in one-letter code: Adapter protein MecA (217 aa).

This sequence belongs to the MecA family. In terms of assembly, homodimer.

Enables the recognition and targeting of unfolded and aggregated proteins to the ClpC protease or to other proteins involved in proteolysis. In Listeria monocytogenes serovar 1/2a (strain ATCC BAA-679 / EGD-e), this protein is Adapter protein MecA.